Consider the following 199-residue polypeptide: Female-specific protein transformer (199 aa).

Disordered stretches follow at residues 1-121 (MDAD…RTPR) and 178-199 (YRAGPFRPHPRYSYRNDRQAPN). Residues 20–37 (REKMPYFADEVRERDRVR) are compositionally biased toward basic and acidic residues. 3 stretches are compositionally biased toward basic residues: residues 56-69 (RRSRHERPRSRSRT), 77-92 (CQRRLSRSYVRHRSGS), and 102-119 (SRRRRSRSRSRSRGRSRT).

Its subcellular location is the nucleus speckle. Member of the regulatory pathway controlling female somatic sexual differentiation, regulated by Sxl. Activates dsx female-specific splicing by promoting the formation of a splicing enhancer complex which consists of tra, tra2 and sr proteins. The protein is Female-specific protein transformer (tra) of Drosophila virilis (Fruit fly).